A 166-amino-acid chain; its full sequence is Small ribosomal subunit protein uS3m (166 aa).

A mitochondrion-targeting transit peptide spans 1–25 (MLRSLQHVESHINQCRRISTTSTLL).

It belongs to the universal ribosomal protein uS3 family. As to quaternary structure, component of the mitochondrial ribosome small subunit (28S) which comprises a 12S rRNA and about 30 distinct proteins.

Its subcellular location is the mitochondrion. This Caenorhabditis briggsae protein is Small ribosomal subunit protein uS3m (mrps-24).